We begin with the raw amino-acid sequence, 297 residues long: N-acetylmannosamine kinase (297 aa).

ATP-binding positions include 5 to 12 and 132 to 139; these read ALDIGGTK and GVGGGIIL. 4 residues coordinate Zn(2+): His-156, Cys-166, Cys-168, and Cys-173.

Belongs to the ROK (NagC/XylR) family. NanK subfamily. As to quaternary structure, homodimer.

The catalysed reaction is an N-acyl-D-mannosamine + ATP = an N-acyl-D-mannosamine 6-phosphate + ADP + H(+). It participates in amino-sugar metabolism; N-acetylneuraminate degradation; D-fructose 6-phosphate from N-acetylneuraminate: step 2/5. Its function is as follows. Catalyzes the phosphorylation of N-acetylmannosamine (ManNAc) to ManNAc-6-P. The chain is N-acetylmannosamine kinase from Pasteurella multocida (strain Pm70).